We begin with the raw amino-acid sequence, 282 residues long: MKLLRYGPSGQEKPGILDSAGRIRDLSAHVPDLAGDVLSDAGLARLRAIDPATLPLVSGEPRIGACVGHVGKFIGIGLNYADHAAEAGMPVPKEPVVFGKWTSSICGPNDGIDIPKGSVKTDWEVELGVVIGAKCKDVDEARALDYVAGYCVVNDVSEREWQIERGGQWDKGKGFDTFGPIGPWLVTRDEVPDPQRLDLWLEIDGHRYQNGNTRTMVFTVAQLVAYLSTCMTLQPGDVITTGTPPGVGMGVKPSPVFLKAGQTVRLGIEGLGEQLQRTRNAQ.

Residues glutamate 124, glutamate 126, and aspartate 155 each coordinate Mg(2+).

Belongs to the FAH family. Requires Mg(2+) as cofactor.

This chain is Putative hydrolase Bcenmc03_4750, found in Burkholderia orbicola (strain MC0-3).